We begin with the raw amino-acid sequence, 178 residues long: Large ribosomal subunit protein uL6 (178 aa).

The protein belongs to the universal ribosomal protein uL6 family. In terms of assembly, part of the 50S ribosomal subunit.

Its function is as follows. This protein binds to the 23S rRNA, and is important in its secondary structure. It is located near the subunit interface in the base of the L7/L12 stalk, and near the tRNA binding site of the peptidyltransferase center. The chain is Large ribosomal subunit protein uL6 from Campylobacter concisus (strain 13826).